Here is a 533-residue protein sequence, read N- to C-terminus: Lysine--tRNA ligase 1 (533 aa).

Residues 26 to 34 carry the 'HIGH' region motif; that stretch reads PSGHIHIGN. The 'KMSKS' region signature appears at 272–276; that stretch reads AMSSS.

It belongs to the class-I aminoacyl-tRNA synthetase family.

The protein resides in the cytoplasm. The catalysed reaction is tRNA(Lys) + L-lysine + ATP = L-lysyl-tRNA(Lys) + AMP + diphosphate. This is Lysine--tRNA ligase 1 from Methanosarcina acetivorans (strain ATCC 35395 / DSM 2834 / JCM 12185 / C2A).